The following is an 840-amino-acid chain: MSKYEFIKIEKKWQEFWDNNKTYKVEEDPSIPKEKRLYILDMFPYPSANGLHVGHPEGYTATDIFGRYKLLNGFHVLHPIGFDSFGLPAENYAIQTGTHPQKSTEENINKFKKQIKALGFAYDWDREIRTHEENYYKWTQWIFLQLYKKGLAYVKEMPVWYCPELGTVLANEEIIQTSDGPKSERGSYSVEKKYLRQWVLKITKYAERLLDDLEELEWPESVKEMQRNWIGKSTGVEIEFEIEGHSDKIKVFTTRPDTIFGITYLVIAPENKLIEKITKNNFKQNVLKYVKHEELKSDLNRTSLEKDKSGVFTGSYAFHPITNEKIPIWVGSYVLGTYGTGAVMGVPAHDERDFQFAKKYQLKILPVISKSGKNEILEKAFVDDGISINSPNEFNNLKNSEVKDKVIKWLTKNKKGKEKVAYKLRDWIFSRQRYWGEPIPILFDKLGNAIPLEENDLPLKLPEIANYKPSGTGESPLSRIKDWVNVKDMGFTRETNTMPQWAGSCWYYLRYLDPKNSKEFANKKKIEYWMPVDLYIGGAEHTVLHLLYSRFWHKVLYDLGYVNTKEPFKKLINQGIITSFSYQKENGVLIPNDQVIEKDNKFFDKKDNKEVTQVIAKMSKSLKNVINPDDIIKEFGADSMRIYEMFMGPLTDSKPWNTKGIIGVFRFLNKIWNLREKELSKENPPREIISELHKVIKKVTEDTEKLNFNTAISAMMIFINELLKYEKNYLNIFKPFIIILSPYAPHLAEELWEYIGELPSLFKNSKWPKFDESLIIKDKKEIVLQINGKIKDKILLNKETGEKELKEIAMENSKIKSNLLNKKIVKIIVIKNKLVNIVIK.

Residues 44–55 (PYPSANGLHVGH) carry the 'HIGH' region motif. The 'KMSKS' region motif lies at 617 to 621 (KMSKS). ATP is bound at residue Lys-620.

The protein belongs to the class-I aminoacyl-tRNA synthetase family.

The protein resides in the cytoplasm. The enzyme catalyses tRNA(Leu) + L-leucine + ATP = L-leucyl-tRNA(Leu) + AMP + diphosphate. The sequence is that of Leucine--tRNA ligase from Borreliella burgdorferi (strain ZS7) (Borrelia burgdorferi).